An 84-amino-acid chain; its full sequence is RNA-binding protein Hfq (84 aa).

Residues 10-70 (DNVLNQVRKN…VSTIIPGKTL (61 aa)) form the Sm domain.

This sequence belongs to the Hfq family. In terms of assembly, homohexamer.

RNA chaperone that binds small regulatory RNA (sRNAs) and mRNAs to facilitate mRNA translational regulation in response to envelope stress, environmental stress and changes in metabolite concentrations. Also binds with high specificity to tRNAs. The protein is RNA-binding protein Hfq of Natranaerobius thermophilus (strain ATCC BAA-1301 / DSM 18059 / JW/NM-WN-LF).